Consider the following 312-residue polypeptide: Aspartate carbamoyltransferase catalytic subunit (312 aa).

Residues R54 and T55 each coordinate carbamoyl phosphate. K83 serves as a coordination point for L-aspartate. R104, H132, and Q135 together coordinate carbamoyl phosphate. L-aspartate is bound by residues R165 and R226. Positions 263 and 264 each coordinate carbamoyl phosphate.

Belongs to the aspartate/ornithine carbamoyltransferase superfamily. ATCase family. As to quaternary structure, heterooligomer of catalytic and regulatory chains.

The catalysed reaction is carbamoyl phosphate + L-aspartate = N-carbamoyl-L-aspartate + phosphate + H(+). It functions in the pathway pyrimidine metabolism; UMP biosynthesis via de novo pathway; (S)-dihydroorotate from bicarbonate: step 2/3. Catalyzes the condensation of carbamoyl phosphate and aspartate to form carbamoyl aspartate and inorganic phosphate, the committed step in the de novo pyrimidine nucleotide biosynthesis pathway. The polypeptide is Aspartate carbamoyltransferase catalytic subunit (Methanothermobacter thermautotrophicus (strain ATCC 29096 / DSM 1053 / JCM 10044 / NBRC 100330 / Delta H) (Methanobacterium thermoautotrophicum)).